The following is a 254-amino-acid chain: Nickel import ATP-binding protein NikD (254 aa).

An ABC transporter domain is found at 2-241; sequence PQQIELRNIT…PKHTVTRSLV (240 aa). 36–43 provides a ligand contact to ATP; it reads GGSGSGKS.

It belongs to the ABC transporter superfamily. Nickel importer (TC 3.A.1.5.3) family. The complex is composed of two ATP-binding proteins (NikD and NikE), two transmembrane proteins (NikB and NikC) and a solute-binding protein (NikA).

The protein localises to the cell inner membrane. It carries out the reaction Ni(2+)(out) + ATP + H2O = Ni(2+)(in) + ADP + phosphate + H(+). Functionally, part of the ABC transporter complex NikABCDE involved in nickel import. Responsible for energy coupling to the transport system. The protein is Nickel import ATP-binding protein NikD of Shigella flexneri.